We begin with the raw amino-acid sequence, 310 residues long: MEKVLAIVGPTAVGKTNLSIDIAKKFNGEIISGDSMQVYQKLDIGTAKVTIEEMQGIPHHLIDTKTIHDRFSAADFKETAQKLISEISQRGKLPIVVGGTGFYLQALLRDLELGGSNEDRNQIEAIRTELNQKENDELLSILKTIDLATYENIDRKNRRRIIRAIEVFKVSGQKMSEQQMQPTAVYDDLLIGLNTERSILYQRINHRVNMMLDAGLENEARWLFDETKVPQANKGIGYREWQDYFKNEKTLSETIELIQKDSRHYAKRQLTWFRNKMDVNWYDIIQNPQEQAKIYQKIENWLGVKNELER.

9–16 (GPTAVGKT) is an ATP binding site. 11 to 16 (TAVGKT) is a binding site for substrate. The segment at 34–37 (DSMQ) is interaction with substrate tRNA.

It belongs to the IPP transferase family. Monomer. Mg(2+) is required as a cofactor.

The enzyme catalyses adenosine(37) in tRNA + dimethylallyl diphosphate = N(6)-dimethylallyladenosine(37) in tRNA + diphosphate. In terms of biological role, catalyzes the transfer of a dimethylallyl group onto the adenine at position 37 in tRNAs that read codons beginning with uridine, leading to the formation of N6-(dimethylallyl)adenosine (i(6)A). This chain is tRNA dimethylallyltransferase, found in Pediococcus pentosaceus (strain ATCC 25745 / CCUG 21536 / LMG 10740 / 183-1w).